The primary structure comprises 425 residues: High-affinity branched-chain amino acid transport system permease protein LivM (425 aa).

Transmembrane regions (helical) follow at residues 6-26, 45-65, 92-112, 120-140, 145-165, 167-187, 191-211, 260-280, 311-331, 353-373, and 388-408; these read IAMALFSAAMFFVLAGVFMGV, WQWIFIGTAVVFFFQLLRPMF, FLMALLVIAVAWPFMVSRGSV, IYIILGLGLNVVVGLSGLLVL, FYAIGAYTFALLNHYYGLGFW, CLPLAGLVSAAAGFLLGFPVL, GDYLAIVTLGFGEIVRILLLN, RVIFLYLVALLLVVLSLFVIN, IKLTAFTISAAFAGFAGTLFA, IVVLGGMGSQFAVILAAVLLV, and LMLGGLMVLMMIWRPQGLLPM.

The protein belongs to the binding-protein-dependent transport system permease family. LivHM subfamily.

It is found in the cell inner membrane. In terms of biological role, part of the binding-protein-dependent transport system for branched-chain amino acids. Probably responsible for the translocation of the substrates across the membrane. This Salmonella typhimurium (strain LT2 / SGSC1412 / ATCC 700720) protein is High-affinity branched-chain amino acid transport system permease protein LivM (livM).